We begin with the raw amino-acid sequence, 101 residues long: UPF0235 protein SG2030 (101 aa).

This sequence belongs to the UPF0235 family.

The protein is UPF0235 protein SG2030 of Sodalis glossinidius (strain morsitans).